The primary structure comprises 101 residues: Apolipoprotein C-II (101 aa).

Positions 1–22 are cleaved as a signal peptide; sequence MGIRYLLVLVLVLLVLGCEVQG. The interval 66–74 is lipid binding; the sequence is TVDEKIREI. The interval 78–101 is lipoprotein lipase cofactor; that stretch reads STAAVSTYAGIFTDQLLSMLKGDQ.

It belongs to the apolipoprotein C2 family. In terms of processing, proapolipoprotein C-II is synthesized as a sialic acid containing glycoprotein which is subsequently desialylated prior to its proteolytic processing. Post-translationally, proapolipoprotein C-II, the major form found in plasma undergoes proteolytic cleavage of its N-terminal hexapeptide to generate apolipoprotein C-II, which occurs as the minor form in plasma.

The protein localises to the secreted. Its function is as follows. Component of chylomicrons, very low-density lipoproteins (VLDL), low-density lipoproteins (LDL), and high-density lipoproteins (HDL) in plasma. Plays an important role in lipoprotein metabolism as an activator of lipoprotein lipase. Both proapolipoprotein C-II and apolipoprotein C-II can activate lipoprotein lipase. The polypeptide is Apolipoprotein C-II (APOC2) (Mirounga angustirostris (Northern elephant seal)).